The following is a 697-amino-acid chain: Elongation factor G 2 (697 aa).

In terms of domain architecture, tr-type G spans 5–280 (SKYRNIGIFA…AVVDYLPAPD (276 aa)). Residues 14–21 (AHVDAGKT), 78–82 (DTPGH), and 132–135 (NKLD) each bind GTP.

Belongs to the TRAFAC class translation factor GTPase superfamily. Classic translation factor GTPase family. EF-G/EF-2 subfamily.

The protein resides in the cytoplasm. Catalyzes the GTP-dependent ribosomal translocation step during translation elongation. During this step, the ribosome changes from the pre-translocational (PRE) to the post-translocational (POST) state as the newly formed A-site-bound peptidyl-tRNA and P-site-bound deacylated tRNA move to the P and E sites, respectively. Catalyzes the coordinated movement of the two tRNA molecules, the mRNA and conformational changes in the ribosome. This chain is Elongation factor G 2, found in Shewanella sp. (strain MR-7).